Here is a 143-residue protein sequence, read N- to C-terminus: Transcriptional regulator MraZ (143 aa).

SpoVT-AbrB domains lie at 5 to 47 (THTP…PRAE) and 76 to 119 (TDEQ…DAQA).

This sequence belongs to the MraZ family. As to quaternary structure, forms oligomers.

The protein resides in the cytoplasm. It localises to the nucleoid. This Mycobacterium leprae (strain Br4923) protein is Transcriptional regulator MraZ.